A 546-amino-acid chain; its full sequence is Aladin (546 aa).

Position 2 is an N-acetylcysteine (C2). The residue at position 33 (S33) is a Phosphoserine. 4 WD repeats span residues 149-188, 191-230, 243-282, and 285-324; these read WSSC…VPSL, RLQR…LSTR, GHTP…CVPL, and FRGG…CEAW. Residues S495, S511, S522, S525, and S541 each carry the phosphoserine modification. Residues 500 to 546 form a disordered region; sequence RAQEPPAGGGGSIHEVPLFTETSPTSAPWDPLPGQSSAQPHSPHSHL. The segment covering 534 to 546 has biased composition (low complexity); the sequence is QSSAQPHSPHSHL. The Microbody targeting signal signature appears at 544-546; that stretch reads SHL.

As to quaternary structure, interacts with NDC1, the interaction is required for nuclear pore localization. Interacts with the inactive form aurora kinase AURKA. Interacts with PGRMC2. In terms of tissue distribution, widely expressed. Particularly abundant in cerebellum, corpus callosum, adrenal gland, pituitary gland, gastrointestinal structures and fetal lung.

It localises to the nucleus. The protein resides in the nuclear pore complex. Its subcellular location is the cytoplasm. The protein localises to the cytoskeleton. It is found in the spindle pole. It localises to the nucleus envelope. Its function is as follows. Plays a role in the normal development of the peripheral and central nervous system. Required for the correct localization of aurora kinase AURKA and the microtubule minus end-binding protein NUMA1 as well as a subset of AURKA targets which ensures proper spindle formation and timely chromosome alignment. This is Aladin (Aaas) from Mus musculus (Mouse).